Here is a 308-residue protein sequence, read N- to C-terminus: Ornithine carbamoyltransferase (308 aa).

Residues 57–60 (STRT), Gln84, Arg108, and 135–138 (HPCQ) contribute to the carbamoyl phosphate site. L-ornithine contacts are provided by residues Asn166, Asp224, and 228–229 (SM). Residues 264-265 (CL) and Arg292 contribute to the carbamoyl phosphate site.

This sequence belongs to the aspartate/ornithine carbamoyltransferase superfamily. OTCase family.

The protein localises to the cytoplasm. The enzyme catalyses carbamoyl phosphate + L-ornithine = L-citrulline + phosphate + H(+). It participates in amino-acid degradation; L-arginine degradation via ADI pathway; carbamoyl phosphate from L-arginine: step 2/2. In terms of biological role, reversibly catalyzes the transfer of the carbamoyl group from carbamoyl phosphate (CP) to the N(epsilon) atom of ornithine (ORN) to produce L-citrulline. The sequence is that of Ornithine carbamoyltransferase from Ralstonia pickettii (strain 12J).